We begin with the raw amino-acid sequence, 616 residues long: Chaperone protein HtpG (616 aa).

Positions 1 to 333 (MKKQFDTEVN…CQDLPLNVSR (333 aa)) are a; substrate-binding. The tract at residues 334–542 (EILQQNKILS…SNDPTYQMQK (209 aa)) is b. The c stretch occupies residues 543-616 (IMLSMGQEVK…INEFLEKDLL (74 aa)).

The protein belongs to the heat shock protein 90 family. As to quaternary structure, homodimer.

Its subcellular location is the cytoplasm. Its function is as follows. Molecular chaperone. Has ATPase activity. This Borreliella afzelii (strain PKo) (Borrelia afzelii) protein is Chaperone protein HtpG.